A 363-amino-acid polypeptide reads, in one-letter code: UDP-N-acetylglucosamine--N-acetylmuramyl-(pentapeptide) pyrophosphoryl-undecaprenol N-acetylglucosamine transferase (363 aa).

UDP-N-acetyl-alpha-D-glucosamine contacts are provided by residues 14 to 16, N122, R163, S190, and Q285; that span reads TGG.

Belongs to the glycosyltransferase 28 family. MurG subfamily.

The protein resides in the cell inner membrane. It carries out the reaction di-trans,octa-cis-undecaprenyl diphospho-N-acetyl-alpha-D-muramoyl-L-alanyl-D-glutamyl-meso-2,6-diaminopimeloyl-D-alanyl-D-alanine + UDP-N-acetyl-alpha-D-glucosamine = di-trans,octa-cis-undecaprenyl diphospho-[N-acetyl-alpha-D-glucosaminyl-(1-&gt;4)]-N-acetyl-alpha-D-muramoyl-L-alanyl-D-glutamyl-meso-2,6-diaminopimeloyl-D-alanyl-D-alanine + UDP + H(+). Its pathway is cell wall biogenesis; peptidoglycan biosynthesis. In terms of biological role, cell wall formation. Catalyzes the transfer of a GlcNAc subunit on undecaprenyl-pyrophosphoryl-MurNAc-pentapeptide (lipid intermediate I) to form undecaprenyl-pyrophosphoryl-MurNAc-(pentapeptide)GlcNAc (lipid intermediate II). This is UDP-N-acetylglucosamine--N-acetylmuramyl-(pentapeptide) pyrophosphoryl-undecaprenol N-acetylglucosamine transferase from Prochlorococcus marinus (strain MIT 9312).